The chain runs to 131 residues: Large ribosomal subunit protein bL12 (131 aa).

This sequence belongs to the bacterial ribosomal protein bL12 family. As to quaternary structure, homodimer. Part of the ribosomal stalk of the 50S ribosomal subunit. Forms a multimeric L10(L12)X complex, where L10 forms an elongated spine to which 2 to 4 L12 dimers bind in a sequential fashion. Binds GTP-bound translation factors.

Functionally, forms part of the ribosomal stalk which helps the ribosome interact with GTP-bound translation factors. Is thus essential for accurate translation. In Prochlorococcus marinus (strain MIT 9312), this protein is Large ribosomal subunit protein bL12.